Reading from the N-terminus, the 510-residue chain is MAAGLAITSEGGQYNGRMTSFVALSCMMAAMGGVIFGYDIGVSGGVTSMDPFLKKFFPDVYRKMKEDTEISNYCKFDSQLLTSFTSSLYVAGLVASFFASSVTRAFGRKPSILLGGXVFLAXAALGGAAVNVYMLIFGRVLLGVGVGFANQAVPLYLSEMAPPRYRGAINNGFQFSVGIGALSANLINYGTEKIEGGWGWRISLAMAAVPAAILTFGALFLPETPNSLIQRSNDHERAKLMLQRVRGTTDVQAELDDLIKASIISRTIQHPFKNIMRRKYRPQLVMAVAIPFFQQVTGINVIAFYAPILFRTIGLEESASLLSSIVTGLVGSASTFISMLIVDKLGRRALFIFGGVQMFVAQIMVGSIMAAELGDHGGIGKGYAYIVLILICIYVAGFGWSWGPLGWLVPSEIFPLEIRSAGQSIVVAVSFLFTFVVAQTFLSMLCHFKSGIFFFFGGWVVVMTAFVHFLLPETKKVPIEKMDIVWRDHWFWKKIIGEEAAEENNKMEAA.

The Cytoplasmic portion of the chain corresponds to 1-22; the sequence is MAAGLAITSEGGQYNGRMTSFV. Transmembrane regions (helical) follow at residues 23–43, 83–103, 118–128, 140–160, 169–189, 202–222, 284–304, 325–345, 349–369, 382–402, 428–448, and 451–471; these read ALSC…IGVS, SFTS…SSVT, VFLAXAALGGA, VLLG…LSEM, INNG…LINY, ISLA…LFLP, LVMA…VIAF, IVTG…VDKL, ALFI…GSIM, GYAY…GWSW, AVSF…LCHF, and GIFF…HFLL. Over 472-510 the chain is Cytoplasmic; the sequence is PETKKVPIEKMDIVWRDHWFWKKIIGEEAAEENNKMEAA.

Belongs to the major facilitator superfamily. Sugar transporter (TC 2.A.1.1) family.

The protein localises to the membrane. Active uptake of hexoses. Probable glucose/hydrogen symport. The polypeptide is Hexose carrier protein HEX6 (HEX6) (Ricinus communis (Castor bean)).